The following is a 207-amino-acid chain: Ribosome maturation factor RimM (207 aa).

In terms of domain architecture, PRC barrel spans 114–207 (DDEYYWVDLI…RIDSDWPLDY (94 aa)).

It belongs to the RimM family. As to quaternary structure, binds ribosomal protein uS19.

It is found in the cytoplasm. In terms of biological role, an accessory protein needed during the final step in the assembly of 30S ribosomal subunit, possibly for assembly of the head region. Essential for efficient processing of 16S rRNA. May be needed both before and after RbfA during the maturation of 16S rRNA. It has affinity for free ribosomal 30S subunits but not for 70S ribosomes. The sequence is that of Ribosome maturation factor RimM from Bordetella pertussis (strain Tohama I / ATCC BAA-589 / NCTC 13251).